The primary structure comprises 548 residues: Nonribosomal peptide synthetase 8 (548 aa).

The Carrier domain occupies 1-77 (MNSLDQWRDT…QLRGENRSGP (77 aa)). At S35 the chain carries O-(pantetheine 4'-phosphoryl)serine. The tract at residues 122-537 (MAPISSIQEF…FKSLIAELAA (416 aa)) is condensation.

It belongs to the NRP synthetase family.

It participates in mycotoxin biosynthesis. Its function is as follows. Nonribosomal peptide synthetase; part of the gene cluster that mediates the biosynthesis of fumonisins B1 (FB1), B2 (FB2), B3 (FB3), and B4 (FB4), which are carcinogenic mycotoxins. Within the pathway FUM14 catalyzes esterification of CoA-activated tricarballylic acid to the C-14 and C-15 hydroxyls of the fumonisin backbone. The biosynthesis starts with the FUM1-catalyzed carbon chain assembly from one molecule of acetyl-CoA, eight molecules of malonyl-CoA, and two molecules of methionine (in S-adenosyl form). The C18 polyketide chain is released from the enzyme by a nucleophilic attack of a carbanion, which is derived from R-carbon of alanine by decarboxylation, on the carbonyl carbon of polyketide acyl chain. This step is catalyzed by the pyridoxal 5'-phosphate-dependent aminoacyl transferase FUM8. The resultant 3-keto intermediate is then stereospecifically reduced to a 3-hydroxyl product by reductase FUM13. Subsequent oxidations at C-10 by the cytochrome P450 monooxygenase FUM2, C-14 and C-15 by FUM6, FUM12 or FUM15, tricarballylic esterification of the hydroxyl groups on C-14 and C-15 by acyltransferase FUM14, and C-5 hydroxylation by 2-keto-glutarate-dependent dioxygenase FUM3 furnish the biosynthesis of fumonisins. The tricarballylic moieties are most likely derived from the citric acid cycle, and their addition to the carbon backbone may involve FUM7, FUM10, FUM11 and FUM14. This is Nonribosomal peptide synthetase 8 from Gibberella moniliformis (strain M3125 / FGSC 7600) (Maize ear and stalk rot fungus).